A 238-amino-acid polypeptide reads, in one-letter code: 1-(5-phosphoribosyl)-5-[(5-phosphoribosylamino)methylideneamino] imidazole-4-carboxamide isomerase (238 aa).

Residue D8 is the Proton acceptor of the active site. Catalysis depends on D127, which acts as the Proton donor.

The protein belongs to the HisA/HisF family.

It localises to the cytoplasm. It catalyses the reaction 1-(5-phospho-beta-D-ribosyl)-5-[(5-phospho-beta-D-ribosylamino)methylideneamino]imidazole-4-carboxamide = 5-[(5-phospho-1-deoxy-D-ribulos-1-ylimino)methylamino]-1-(5-phospho-beta-D-ribosyl)imidazole-4-carboxamide. The protein operates within amino-acid biosynthesis; L-histidine biosynthesis; L-histidine from 5-phospho-alpha-D-ribose 1-diphosphate: step 4/9. The polypeptide is 1-(5-phosphoribosyl)-5-[(5-phosphoribosylamino)methylideneamino] imidazole-4-carboxamide isomerase (Nitratiruptor sp. (strain SB155-2)).